The sequence spans 135 residues: Mediator of RNA polymerase II transcription subunit 10 (135 aa).

It belongs to the Mediator complex subunit 10 family. In terms of assembly, component of the Mediator complex, which is composed of MED1, MED4, MED6, MED7, MED8, MED9, MED10, MED11, MED12, MED13, MED13L, MED14, MED15, MED16, MED17, MED18, MED19, MED20, MED21, MED22, MED23, MED24, MED25, MED26, MED27, MED29, MED30, MED31, CCNC, CDK8 and CDC2L6/CDK11. The MED12, MED13, CCNC and CDK8 subunits form a distinct module termed the CDK8 module. Mediator containing the CDK8 module is less active than Mediator lacking this module in supporting transcriptional activation. Individual preparations of the Mediator complex lacking one or more distinct subunits have been variously termed ARC, CRSP, DRIP, PC2, SMCC and TRAP.

The protein resides in the nucleus. Its function is as follows. Component of the Mediator complex, a coactivator involved in the regulated transcription of nearly all RNA polymerase II-dependent genes. Mediator functions as a bridge to convey information from gene-specific regulatory proteins to the basal RNA polymerase II transcription machinery. Mediator is recruited to promoters by direct interactions with regulatory proteins and serves as a scaffold for the assembly of a functional preinitiation complex with RNA polymerase II and the general transcription factors. In Homo sapiens (Human), this protein is Mediator of RNA polymerase II transcription subunit 10 (MED10).